A 459-amino-acid chain; its full sequence is Putrescine aminotransferase (459 aa).

Residues 150 to 151 (GT) and Gln274 contribute to the pyridoxal 5'-phosphate site. Lys300 carries the N6-(pyridoxal phosphate)lysine modification. Thr332 provides a ligand contact to pyridoxal 5'-phosphate.

Belongs to the class-III pyridoxal-phosphate-dependent aminotransferase family. Putrescine aminotransferase subfamily. Pyridoxal 5'-phosphate serves as cofactor.

The catalysed reaction is an alkane-alpha,omega-diamine + 2-oxoglutarate = an omega-aminoaldehyde + L-glutamate. It carries out the reaction putrescine + 2-oxoglutarate = 1-pyrroline + L-glutamate + H2O. The enzyme catalyses cadaverine + 2-oxoglutarate = 5-aminopentanal + L-glutamate. It participates in amine and polyamine degradation; putrescine degradation; 4-aminobutanal from putrescine (transaminase route): step 1/1. Its function is as follows. Catalyzes the aminotransferase reaction from putrescine to 2-oxoglutarate, leading to glutamate and 4-aminobutanal, which spontaneously cyclizes to form 1-pyrroline. This is the first step in one of two pathways for putrescine degradation, where putrescine is converted into 4-aminobutanoate (gamma-aminobutyrate or GABA) via 4-aminobutanal. Also functions as a cadaverine transaminase in a a L-lysine degradation pathway to succinate that proceeds via cadaverine, glutarate and L-2-hydroxyglutarate. The chain is Putrescine aminotransferase from Escherichia coli O9:H4 (strain HS).